The chain runs to 435 residues: GTPase Der (435 aa).

EngA-type G domains are found at residues 4–167 (KIVA…SKND) and 175–350 (TKIA…QSLS). Residues 10–17 (GKPNVGKS), 57–61 (DTGGI), 119–122 (NKYD), 181–188 (GKPNVGKS), 228–232 (DTAGI), and 293–296 (NKWD) each bind GTP. The region spanning 351 to 435 (VKVKTYVLNE…PINLIFRERK (85 aa)) is the KH-like domain.

The protein belongs to the TRAFAC class TrmE-Era-EngA-EngB-Septin-like GTPase superfamily. EngA (Der) GTPase family. In terms of assembly, associates with the 50S ribosomal subunit.

Functionally, GTPase that plays an essential role in the late steps of ribosome biogenesis. In Mycoplasma capricolum subsp. capricolum (strain California kid / ATCC 27343 / NCTC 10154), this protein is GTPase Der.